Reading from the N-terminus, the 529-residue chain is MAEVSLTKKEMTTKGKSENSKKMKTDMADMVPIAAMNEDLLHNILLRLPAKSFAFASCVNRFWSSVCNRILSRPKMISAFSRNPDQLRAGEEVLDKVLSEPIRPQFVIANITCGNMEETLTLITERVGSRVPIIVSVVTGILGKEACNDKAGEVRLHSTSDDELFDVANFAILLTIGYLPGMKVDIIPVIQAKGESGAEMEDKFVMDIRNYMSMVSGHAAAPACLILFAEDTHATEPVLHKLDYAMPAETVIVGGQIGEFLHKRGNEPRNVQLQKDDIRVLAGLIFARDRHRPAQAERIQFDTAISNGMSSVDLRYKAANVNVSLGPSCPSTLLTAKRRGEAEVLDGDQILDDIDNILENYIWENDSYLGVIKRRKYSIGLEEKPKIMSSLVFHQVNGSDDQDLLVDGAGIKTGDQFQVYLPDLKVAEAALNDVSAQLRNLKSKPNKPEVVGGFAFVGSCRGDSFFGCPNADSSPFLENFPELPFGGIFCDGEIGRSLILEEGEEKKEVSIQRFLHVYSSVYLIVSYTS.

Positions 1 to 22 (MAEVSLTKKEMTTKGKSENSKK) are disordered. In terms of domain architecture, F-box spans 31-78 (VPIAAMNEDLLHNILLRLPAKSFAFASCVNRFWSSVCNRILSRPKMIS). 2 LRR repeats span residues 265–288 (GNEP…IFAR) and 418–441 (QVYL…LRNL).

This Arabidopsis thaliana (Mouse-ear cress) protein is F-box/LRR-repeat protein At5g63520.